A 353-amino-acid chain; its full sequence is UDP-galactose transporter (353 aa).

Helical transmembrane passes span 147-167, 184-204, 215-235, 254-274, 279-299, and 302-322; these read LGPM…IVQL, VTGF…GVYF, LWVR…FTIL, IVWL…LCVA, IMKN…SVYL, and FKIS…TFLY. Residues 325–353 are disordered; sequence PESKPSPSRGTYIPMTTQDAAAKDVDHKH. The segment covering 329-343 has biased composition (polar residues); that stretch reads PSPSRGTYIPMTTQD.

It belongs to the nucleotide-sugar transporter family. SLC35A subfamily.

Its subcellular location is the golgi apparatus membrane. Its function is as follows. Essential for the transport of UDP-galactose into the lumen of Golgi apparatus. In Schizosaccharomyces pombe (strain 972 / ATCC 24843) (Fission yeast), this protein is UDP-galactose transporter (gms1).